We begin with the raw amino-acid sequence, 109 residues long: Large ribosomal subunit protein uL22 (109 aa).

It belongs to the universal ribosomal protein uL22 family. In terms of assembly, part of the 50S ribosomal subunit.

Its function is as follows. This protein binds specifically to 23S rRNA; its binding is stimulated by other ribosomal proteins, e.g. L4, L17, and L20. It is important during the early stages of 50S assembly. It makes multiple contacts with different domains of the 23S rRNA in the assembled 50S subunit and ribosome. The globular domain of the protein is located near the polypeptide exit tunnel on the outside of the subunit, while an extended beta-hairpin is found that lines the wall of the exit tunnel in the center of the 70S ribosome. This chain is Large ribosomal subunit protein uL22, found in Polaromonas sp. (strain JS666 / ATCC BAA-500).